A 542-amino-acid polypeptide reads, in one-letter code: Putative serine/threonine-protein kinase L205 (542 aa).

Basic and acidic residues predominate over residues 20-30 (FEKKSVGHNSD). The disordered stretch occupies residues 20–49 (FEKKSVGHNSDDEYDDTVPYNEDDETSEEE). Positions 31 to 49 (DEYDDTVPYNEDDETSEEE) are enriched in acidic residues. In terms of domain architecture, Protein kinase spans 69–538 (YLLLKKIGSG…ADELLKHPWL (470 aa)). ATP-binding positions include 75-83 (IGSGNNASV) and lysine 98. Aspartate 201 acts as the Proton acceptor in catalysis. Residues 278-314 (EELIPDDPDNNEKYYDSTDSEEYDYSDNSDYYDDDED) form a disordered region. The segment covering 295-314 (TDSEEYDYSDNSDYYDDDED) has biased composition (acidic residues).

This sequence belongs to the protein kinase superfamily. Ser/Thr protein kinase family.

The enzyme catalyses L-seryl-[protein] + ATP = O-phospho-L-seryl-[protein] + ADP + H(+). It carries out the reaction L-threonyl-[protein] + ATP = O-phospho-L-threonyl-[protein] + ADP + H(+). The sequence is that of Putative serine/threonine-protein kinase L205 from Acanthamoeba polyphaga (Amoeba).